Reading from the N-terminus, the 373-residue chain is Histidinol-phosphate aminotransferase 2 (373 aa).

Lysine 229 carries the N6-(pyridoxal phosphate)lysine modification.

It belongs to the class-II pyridoxal-phosphate-dependent aminotransferase family. Histidinol-phosphate aminotransferase subfamily. In terms of assembly, homodimer. It depends on pyridoxal 5'-phosphate as a cofactor.

It carries out the reaction L-histidinol phosphate + 2-oxoglutarate = 3-(imidazol-4-yl)-2-oxopropyl phosphate + L-glutamate. It functions in the pathway amino-acid biosynthesis; L-histidine biosynthesis; L-histidine from 5-phospho-alpha-D-ribose 1-diphosphate: step 7/9. The chain is Histidinol-phosphate aminotransferase 2 from Hydrogenovibrio crunogenus (strain DSM 25203 / XCL-2) (Thiomicrospira crunogena).